We begin with the raw amino-acid sequence, 70 residues long: Delta-hexatoxin-Mg1b (70 aa).

A signal peptide spans 1 to 26; that stretch reads MKILEKALLENDSAAEEESRNLRTKR. 4 cysteine pairs are disulfide-bonded: cysteine 27–cysteine 41, cysteine 34–cysteine 46, cysteine 40–cysteine 57, and cysteine 42–cysteine 68.

In terms of tissue distribution, expressed by the venom gland.

The protein resides in the secreted. In terms of biological role, inhibits tetrodotoxin-sensitive sodium channels (Nav). Intracranial injection into mice causes strong convulsions and death. Intrathorax injection into crickets causes paralysis prolonged for 2 minutes, followed by recovery. This Macrothele gigas (Japanese funnel web spider) protein is Delta-hexatoxin-Mg1b.